The following is a 246-amino-acid chain: MKQQEVRQRAFAMPLTSPAFPPGPYRFVNREYMIITYRTDPAAIEAVLPEPLQMAEPVVRYEFIRMPDSTGFGDYSESGQVIPVTFRGERGSYTLAMFLDDQPPLAGGRELWGFPKKAGKPRLEVHQDTLVGSLDFGPVRIATGTMGYKYEALDRSALLASLAEPNFLLKIIPHVDGSPRICELVRYHTTDVAIKGAWSAPGSLELHPHALAPVAALPVLEVLSARHFVCDLTLDLGTVVFDYLRQ.

Lys-116 functions as the Schiff-base intermediate with acetoacetate in the catalytic mechanism.

It belongs to the ADC family. Homododecamer.

It catalyses the reaction acetoacetate + H(+) = acetone + CO2. Catalyzes the conversion of acetoacetate to acetone and carbon dioxide. This Chromobacterium violaceum (strain ATCC 12472 / DSM 30191 / JCM 1249 / CCUG 213 / NBRC 12614 / NCIMB 9131 / NCTC 9757 / MK) protein is Acetoacetate decarboxylase.